The chain runs to 440 residues: Armadillo-like helical domain containing protein 1 (440 aa).

The protein is Armadillo-like helical domain containing protein 1 of Homo sapiens (Human).